The primary structure comprises 59 residues: Gallinacin-14 (59 aa).

Positions 1–18 (MGIFLLFLVLLAVPQAAP) are cleaved as a signal peptide. 3 disulfide bridges follow: cysteine 25/cysteine 54, cysteine 32/cysteine 47, and cysteine 37/cysteine 55.

Belongs to the beta-defensin family.

It localises to the secreted. Its subcellular location is the cytoplasmic granule. Has bactericidal activity. The protein is Gallinacin-14 (GAL14) of Gallus gallus (Chicken).